Consider the following 148-residue polypeptide: NADH-quinone oxidoreductase subunit A (148 aa).

The next 3 helical transmembrane spans lie at 14-34 (WAFA…LVGG), 68-88 (FYLV…LYAW), and 98-118 (VGFV…VYLV).

It belongs to the complex I subunit 3 family. In terms of assembly, NDH-1 is composed of 13 different subunits. Subunits NuoA, H, J, K, L, M, N constitute the membrane sector of the complex.

It is found in the cell inner membrane. It carries out the reaction a quinone + NADH + 5 H(+)(in) = a quinol + NAD(+) + 4 H(+)(out). Its function is as follows. NDH-1 shuttles electrons from NADH, via FMN and iron-sulfur (Fe-S) centers, to quinones in the respiratory chain. The immediate electron acceptor for the enzyme in this species is believed to be ubiquinone. Couples the redox reaction to proton translocation (for every two electrons transferred, four hydrogen ions are translocated across the cytoplasmic membrane), and thus conserves the redox energy in a proton gradient. The sequence is that of NADH-quinone oxidoreductase subunit A from Klebsiella pneumoniae subsp. pneumoniae (strain ATCC 700721 / MGH 78578).